The following is a 480-amino-acid chain: Argininosuccinate lyase (480 aa).

A disordered region spans residues 1 to 20; it reads MTQQDGGQAGQAEPTKLWGG.

Belongs to the lyase 1 family. Argininosuccinate lyase subfamily.

It is found in the cytoplasm. The enzyme catalyses 2-(N(omega)-L-arginino)succinate = fumarate + L-arginine. The protein operates within amino-acid biosynthesis; L-arginine biosynthesis; L-arginine from L-ornithine and carbamoyl phosphate: step 3/3. This Saccharopolyspora erythraea (strain ATCC 11635 / DSM 40517 / JCM 4748 / NBRC 13426 / NCIMB 8594 / NRRL 2338) protein is Argininosuccinate lyase.